The following is a 134-amino-acid chain: Holo-[acyl-carrier-protein] synthase (134 aa).

Residues aspartate 8 and glutamate 57 each contribute to the Mg(2+) site.

Belongs to the P-Pant transferase superfamily. AcpS family. Mg(2+) is required as a cofactor.

It is found in the cytoplasm. It carries out the reaction apo-[ACP] + CoA = holo-[ACP] + adenosine 3',5'-bisphosphate + H(+). Transfers the 4'-phosphopantetheine moiety from coenzyme A to a Ser of acyl-carrier-protein. This is Holo-[acyl-carrier-protein] synthase from Brucella abortus (strain S19).